Reading from the N-terminus, the 131-residue chain is Large ribosomal subunit protein bL19 (131 aa).

It belongs to the bacterial ribosomal protein bL19 family.

This protein is located at the 30S-50S ribosomal subunit interface and may play a role in the structure and function of the aminoacyl-tRNA binding site. This chain is Large ribosomal subunit protein bL19, found in Anaeromyxobacter dehalogenans (strain 2CP-C).